The sequence spans 384 residues: MTTKALGDFKDSAAFSLGVELELQLVSKRDFDLTRGATDLLGSLDYDERFGEIKLEITESMIEISTQPQSTVDGIAADLSGLRDTLRQHCERNNIGICGGGTHPFHHWPERRICPGDRFNDLYQRYGYLAKQFTVFGQHVHIGCTSADEAIWLTQAFGVYVPAFIALSASSPFVDGVDSFYQSARLNAVSAFPLSGQCPPLGSWQEFTEHFAFLQACGIAQSIKDLYWDVRPKPEFGTVEIRVCDTPLTIEQATSLAALAQSLARWLLRTRPPLHTAKQAHVARYNKFQACRYGFEAMISDPVNLCQTPLKQTLADLLEAVSEDARELDCADWLSPLKQAVAENTGDAAWLRARENQHGNLNDVVREASKRLMGKNDQFQEKTK.

The protein belongs to the glutamate--cysteine ligase type 2 family. YbdK subfamily.

The enzyme catalyses L-cysteine + L-glutamate + ATP = gamma-L-glutamyl-L-cysteine + ADP + phosphate + H(+). ATP-dependent carboxylate-amine ligase which exhibits weak glutamate--cysteine ligase activity. This Dechloromonas aromatica (strain RCB) protein is Putative glutamate--cysteine ligase 2.